We begin with the raw amino-acid sequence, 176 residues long: MKTVQDYIRTIVDFPHEGIMFRDVTTLFADPRGFRIAIDQMLHPYAGLQIDKVVGLEARGFILGGAIAHQLSKGFVPIRKKGKLPGKTISEAYTLEYGEAIVEIHDDAIQPGEKVLVVDDLLATGGTAEAGIKLIERLGGEIISTSFIIDLPDLGGRARLEAMGVEVNALCAYEGL.

This sequence belongs to the purine/pyrimidine phosphoribosyltransferase family. Homodimer.

It is found in the cytoplasm. It catalyses the reaction AMP + diphosphate = 5-phospho-alpha-D-ribose 1-diphosphate + adenine. It participates in purine metabolism; AMP biosynthesis via salvage pathway; AMP from adenine: step 1/1. Catalyzes a salvage reaction resulting in the formation of AMP, that is energically less costly than de novo synthesis. This Roseobacter denitrificans (strain ATCC 33942 / OCh 114) (Erythrobacter sp. (strain OCh 114)) protein is Adenine phosphoribosyltransferase.